A 205-amino-acid polypeptide reads, in one-letter code: Dr1-associated corepressor (205 aa).

Residues 14-77 (PARIKKIMQT…SHLKQCIELE (64 aa)) form the Histone-fold domain. The disordered stretch occupies residues 91 to 205 (PDMQGDGEDN…DAEDEEDYDS (115 aa)). A compositionally biased stretch (basic and acidic residues) spans 98–108 (EDNHVDGDKGP). Residues 138–155 (SEQEDESEDTDTDGEEET) are compositionally biased toward acidic residues. The segment covering 172–192 (PPTPFIPFTSPLPLPPAPPGP) has biased composition (pro residues). Residues 196–205 (DAEDEEDYDS) are compositionally biased toward acidic residues.

Belongs to the NC2 alpha/DRAP1 family. In terms of assembly, heterodimer with DR1. Binds BTAF1. Phosphorylation reduces DNA binding, but has no effect on heterodimerization and TBP binding.

The protein resides in the nucleus. Its function is as follows. The association of the DR1/DRAP1 heterodimer with TBP results in a functional repression of both activated and basal transcription of class II genes. This interaction precludes the formation of a transcription-competent complex by inhibiting the association of TFIIA and/or TFIIB with TBP. Can bind to DNA on its own. The chain is Dr1-associated corepressor (Drap1) from Mus musculus (Mouse).